Here is a 942-residue protein sequence, read N- to C-terminus: Glutamyl aminopeptidase (942 aa).

The Cytoplasmic segment spans residues 1-14; sequence MSTDSKRYCIKTKH. The helical; Signal-anchor for type II membrane protein transmembrane segment at 15–35 threads the bilayer; that stretch reads VAIICAAVVAVGLIVGLSVGL. The Extracellular portion of the chain corresponds to 36–942; sequence TRSCDSKDGG…RDTIRDWFFN (907 aa). The disordered stretch occupies residues 40–74; it reads DSKDGGQGTTQSPSHLPPTSSPPQDQGVCPASEDE. N-linked (GlcNAc...) asparagine glycans are attached at residues asparagine 110, asparagine 114, and asparagine 187. A substrate-binding site is contributed by glutamate 213. Asparagine 314 is a glycosylation site (N-linked (GlcNAc...) asparagine). A substrate-binding site is contributed by 347–351; the sequence is GAMEN. N-linked (GlcNAc...) asparagine glycosylation occurs at asparagine 367. Histidine 383 contacts Zn(2+). Glutamate 384 acts as the Proton acceptor in catalysis. 2 residues coordinate Zn(2+): histidine 387 and glutamate 406. Asparagine 557, asparagine 579, asparagine 587, asparagine 597, asparagine 632, asparagine 668, asparagine 753, asparagine 786, and asparagine 791 each carry an N-linked (GlcNAc...) asparagine glycan. Residue arginine 877 participates in substrate binding.

It belongs to the peptidase M1 family. In terms of assembly, homodimer; disulfide-linked. Requires Zn(2+) as cofactor.

It is found in the cell membrane. It catalyses the reaction Release of N-terminal glutamate (and to a lesser extent aspartate) from a peptide.. Its activity is regulated as follows. Substrate specificity is modulated by calcium which enhances the enzymatic activity for cleavage of acidic residues while reducing its activity with basic residues. Inhibited by aminopeptidase inhibitors amastatin and bestatin. Regulates central hypertension through its calcium-modulated preference to cleave N-terminal acidic residues from peptides such as angiotensin II. The protein is Glutamyl aminopeptidase (ENPEP) of Sus scrofa (Pig).